A 232-amino-acid chain; its full sequence is Golgi SNAP receptor complex member 1 (232 aa).

Residues 1 to 211 (MGGSSYDVLR…QRINIKKRRD (211 aa)) lie on the Cytoplasmic side of the membrane. Coiled coils occupy residues 6-23 (YDVL…IDLK) and 52-80 (GEHV…MSDL). The chain crosses the membrane as a helical; Anchor for type IV membrane protein span at residues 212–232 (SLILGAVIGFCVILLLLYAFN).

It belongs to the GOSR1 family. As to quaternary structure, component of several multiprotein Golgi SNARE complexes.

It localises to the golgi apparatus membrane. Functionally, involved in transport from the ER to the Golgi apparatus as well as in intra-Golgi transport. It belongs to a super-family of proteins called t-SNAREs or soluble NSF (N-ethylmaleimide-sensitive factor) attachment protein receptor. The chain is Golgi SNAP receptor complex member 1 (Gos28) from Drosophila melanogaster (Fruit fly).